Here is a 351-residue protein sequence, read N- to C-terminus: uncharacterized protein (351 aa).

It belongs to the bacterial luciferase oxidoreductase family.

This is an uncharacterized protein from Sinorhizobium fredii (strain NBRC 101917 / NGR234).